The sequence spans 139 residues: Putative nickel-responsive regulator (139 aa).

The Ni(2+) site is built by H79, H90, H92, and C98.

This sequence belongs to the transcriptional regulatory CopG/NikR family. Ni(2+) serves as cofactor.

Functionally, transcriptional regulator. This is Putative nickel-responsive regulator from Solibacter usitatus (strain Ellin6076).